Consider the following 815-residue polypeptide: Serotype-specific mannosyltransferase WbdA (815 aa).

The tract at residues 1-374 is alpha-(1-&gt;2)-mannosyltransferase; that stretch reads MSRAIIENAG…WANTAHLAID (374 aa). Residues 431–804 form an alpha-(1-&gt;3)-mannosyltransferase region; the sequence is KLLVDISVLA…WKQSAELLLK (374 aa).

Belongs to the glycosyltransferase group 1 family. Glycosyltransferase 4 subfamily.

It is found in the cell inner membrane. Its pathway is bacterial outer membrane biogenesis; LPS O-antigen biosynthesis. Its function is as follows. Mannosyltransferase involved in the biosynthesis of the repeat unit of the lipopolysaccharide (LPS) O-antigen region. In Escherichia coli, this protein is Serotype-specific mannosyltransferase WbdA.